Here is a 116-residue protein sequence, read N- to C-terminus: Cell division protein FtsL (116 aa).

At 1 to 24 (MMLTNRQIRVRLFESLKNSFFKKT) the chain is on the cytoplasmic side. Residues 25-45 (VGISFALLFILLITAFSLIVV) form a helical membrane-spanning segment. The Periplasmic segment spans residues 46 to 116 (RFEYKLQLNE…NEQKEELNNE (71 aa)).

This sequence belongs to the FtsL family. Part of a complex composed of FtsB, FtsL and FtsQ.

The protein localises to the cell inner membrane. In terms of biological role, essential cell division protein. May link together the upstream cell division proteins, which are predominantly cytoplasmic, with the downstream cell division proteins, which are predominantly periplasmic. This Francisella tularensis subsp. tularensis (strain SCHU S4 / Schu 4) protein is Cell division protein FtsL.